The primary structure comprises 144 residues: Vasopressin-neurophysin 2-copeptin (144 aa).

Cys1 and Cys6 form a disulfide bridge. Residue Gly9 is modified to Glycine amide. 7 disulfides stabilise this stretch: Cys22–Cys66, Cys25–Cys39, Cys33–Cys56, Cys40–Cys46, Cys73–Cys85, Cys79–Cys97, and Cys86–Cys91. The N-linked (GlcNAc...) asparagine glycan is linked to Asn112.

Belongs to the vasopressin/oxytocin family. In terms of assembly, interacts with vasopressin receptors V1bR/AVPR1B (Ki=85 pM), V1aR/AVPR1A (Ki=0.6 nM) and V2R/AVPR2 (Ki=4.9 nM). Interacts with oxytocin receptor (OXTR) (Ki=110 nM).

The protein resides in the secreted. Neurophysin 2 specifically binds vasopressin. In terms of biological role, vasopressin has a direct antidiuretic action on the kidney, it also causes vasoconstriction of the peripheral vessels. Acts by binding to vasopressin receptors (V1bR/AVPR1B, V1aR/AVPR1A, and V2R/AVPR2). This Cavia porcellus (Guinea pig) protein is Vasopressin-neurophysin 2-copeptin (AVP).